We begin with the raw amino-acid sequence, 329 residues long: 4-hydroxy-3-methylbut-2-enyl diphosphate reductase (329 aa).

Position 27 (C27) interacts with [4Fe-4S] cluster. The (2E)-4-hydroxy-3-methylbut-2-enyl diphosphate site is built by H56 and H89. Residues H56 and H89 each contribute to the dimethylallyl diphosphate site. Residues H56 and H89 each contribute to the isopentenyl diphosphate site. C111 contacts [4Fe-4S] cluster. H139 is a (2E)-4-hydroxy-3-methylbut-2-enyl diphosphate binding site. Position 139 (H139) interacts with dimethylallyl diphosphate. H139 contacts isopentenyl diphosphate. E141 serves as the catalytic Proton donor. T179 lines the (2E)-4-hydroxy-3-methylbut-2-enyl diphosphate pocket. C209 serves as a coordination point for [4Fe-4S] cluster. (2E)-4-hydroxy-3-methylbut-2-enyl diphosphate-binding residues include S237, S238, N239, and S281. Dimethylallyl diphosphate is bound by residues S237, S238, N239, and S281. Isopentenyl diphosphate contacts are provided by S237, S238, N239, and S281.

It belongs to the IspH family. [4Fe-4S] cluster is required as a cofactor.

The catalysed reaction is isopentenyl diphosphate + 2 oxidized [2Fe-2S]-[ferredoxin] + H2O = (2E)-4-hydroxy-3-methylbut-2-enyl diphosphate + 2 reduced [2Fe-2S]-[ferredoxin] + 2 H(+). It carries out the reaction dimethylallyl diphosphate + 2 oxidized [2Fe-2S]-[ferredoxin] + H2O = (2E)-4-hydroxy-3-methylbut-2-enyl diphosphate + 2 reduced [2Fe-2S]-[ferredoxin] + 2 H(+). The protein operates within isoprenoid biosynthesis; dimethylallyl diphosphate biosynthesis; dimethylallyl diphosphate from (2E)-4-hydroxy-3-methylbutenyl diphosphate: step 1/1. It participates in isoprenoid biosynthesis; isopentenyl diphosphate biosynthesis via DXP pathway; isopentenyl diphosphate from 1-deoxy-D-xylulose 5-phosphate: step 6/6. In terms of biological role, catalyzes the conversion of 1-hydroxy-2-methyl-2-(E)-butenyl 4-diphosphate (HMBPP) into a mixture of isopentenyl diphosphate (IPP) and dimethylallyl diphosphate (DMAPP). Acts in the terminal step of the DOXP/MEP pathway for isoprenoid precursor biosynthesis. The chain is 4-hydroxy-3-methylbut-2-enyl diphosphate reductase from Methylibium petroleiphilum (strain ATCC BAA-1232 / LMG 22953 / PM1).